Here is a 715-residue protein sequence, read N- to C-terminus: ATP-dependent zinc metalloprotease FtsH (715 aa).

Over 1–10 (MKNKNRGFFR) the chain is Cytoplasmic. Residues 11–31 (SSLSYAFVILAVIFLIYSFFG) traverse the membrane as a helical segment. The Extracellular portion of the chain corresponds to 32–137 (RSDGSVKHLS…KPAASNFWGS (106 aa)). A helical membrane pass occupies residues 138 to 158 (MLTLILPTLIMFALLYWMLIG). At 159 to 715 (SQRGQGGSGG…LLDAVNNKFD (557 aa)) the chain is on the cytoplasmic side. Positions 167 to 187 (GGPGGIMSFGRSKAKPADPKQ) are disordered. 233–240 (GPPGTGKT) contributes to the ATP binding site. Histidine 455 contacts Zn(2+). The active site involves glutamate 456. The Zn(2+) site is built by histidine 459 and aspartate 531.

This sequence in the central section; belongs to the AAA ATPase family. It in the C-terminal section; belongs to the peptidase M41 family. As to quaternary structure, homohexamer. The cofactor is Zn(2+).

It localises to the cell membrane. Its function is as follows. Acts as a processive, ATP-dependent zinc metallopeptidase for both cytoplasmic and membrane proteins. Plays a role in the quality control of integral membrane proteins. In terms of biological role, can complement an E.coli ftsH disruption mutant. The sequence is that of ATP-dependent zinc metalloprotease FtsH from Oenococcus oeni (Leuconostoc oenos).